Reading from the N-terminus, the 297-residue chain is Protoheme IX farnesyltransferase (297 aa).

The next 9 membrane-spanning stretches (helical) occupy residues 23 to 43 (VTQL…PGLP), 49 to 69 (VFGT…NCLI), 90 to 110 (ISAA…MLVL), 117 to 137 (LTMW…TVIL), 144 to 164 (NIVI…AAVA), 171 to 191 (AWVL…ALAL), 215 to 235 (RLHI…PYII), 238 to 258 (SGLL…AYAW), and 277 to 297 (ILYL…GLLA).

The protein belongs to the UbiA prenyltransferase family. Protoheme IX farnesyltransferase subfamily.

Its subcellular location is the cell inner membrane. It catalyses the reaction heme b + (2E,6E)-farnesyl diphosphate + H2O = Fe(II)-heme o + diphosphate. Its pathway is porphyrin-containing compound metabolism; heme O biosynthesis; heme O from protoheme: step 1/1. Functionally, converts heme B (protoheme IX) to heme O by substitution of the vinyl group on carbon 2 of heme B porphyrin ring with a hydroxyethyl farnesyl side group. This chain is Protoheme IX farnesyltransferase, found in Bordetella petrii (strain ATCC BAA-461 / DSM 12804 / CCUG 43448).